The primary structure comprises 161 residues: Cyclic pyranopterin monophosphate synthase (161 aa).

Residues 75 to 77 (LCH) and 113 to 114 (ME) each bind substrate. Residue Asp128 is part of the active site.

It belongs to the MoaC family. As to quaternary structure, homohexamer; trimer of dimers.

It carries out the reaction (8S)-3',8-cyclo-7,8-dihydroguanosine 5'-triphosphate = cyclic pyranopterin phosphate + diphosphate. It functions in the pathway cofactor biosynthesis; molybdopterin biosynthesis. Functionally, catalyzes the conversion of (8S)-3',8-cyclo-7,8-dihydroguanosine 5'-triphosphate to cyclic pyranopterin monophosphate (cPMP). This is Cyclic pyranopterin monophosphate synthase from Escherichia coli O9:H4 (strain HS).